Consider the following 353-residue polypeptide: Chemerin-like receptor 2 (353 aa).

The Extracellular portion of the chain corresponds to 1 to 41; sequence MEVSKEMLFEELDNYSYALDYYSQESDPEEKVYLGLVHWIS. Asn-14 is a glycosylation site (N-linked (GlcNAc...) asparagine). The chain crosses the membrane as a helical span at residues 42 to 62; sequence LFLYALAFVLGIPGNAIVIWL. The Cytoplasmic segment spans residues 63-73; it reads MGFKWKKTVTT. The helical transmembrane segment at 74-94 threads the bilayer; it reads LWFLNLAIADFIFVLFLPLYI. Residues 95–112 are Extracellular-facing; sequence SYVALSFHWPFGLWLCKV. A disulfide bridge connects residues Cys-110 and Cys-187. The chain crosses the membrane as a helical span at residues 113 to 133; it reads NSFIAQLNMFSSVFFLTVISL. The Cytoplasmic portion of the chain corresponds to 134-154; it reads DRYIHLLHPGLSHRHRTLKSS. A helical membrane pass occupies residues 155–175; it reads LVVVILVWLLASLLGGPTLYF. Residues 176–210 are Extracellular-facing; it reads RDTMEVNNHIICYNNFQEHELTLMRHHVLTWVKFL. Residues 211-231 form a helical membrane-spanning segment; that stretch reads FGYLFPLLTMSSCYLCLIFKM. Topologically, residues 232–247 are cytoplasmic; it reads KKRNILISRKHLWMIL. Residues 248 to 268 traverse the membrane as a helical segment; sequence SVVIAFLVCWTPYHLFSIWEL. Topologically, residues 269–286 are extracellular; it reads SIHHNSSFQNVLQGGIPL. The helical transmembrane segment at 287–307 threads the bilayer; that stretch reads STGLAFLNSCLNPILYVLISK. Over 308–353 the chain is Cytoplasmic; it reads TFQARFRASVAEVLKRSLWEASCSGTVSEQLRSAETKSLSLLETAQ.

The protein belongs to the chemokine-like receptor (CMKLR) family. As to expression, high expressed in white adipose tissue and skeletal muscle. Expressed in hippocampus and cortex.

Its subcellular location is the cell membrane. Functionally, receptor for chemoattractant adipokine chemerin/RARRES2 suggesting a role for this receptor in the regulation of inflammation and energy homesotasis. Signals mainly via beta-arrestin pathway. Binding of RARRES2 activates weakly G proteins, calcium mobilization and MAPK1/MAPK3 (ERK1/2) phosphorylation too. Acts also as a receptor for TAFA1, mediates its effects on neuronal stem-cell proliferation and differentiation via the activation of ROCK/ERK and ROCK/STAT3 signaling pathway. The protein is Chemerin-like receptor 2 (Cmklr2) of Mus musculus (Mouse).